The following is a 147-amino-acid chain: D-aminoacyl-tRNA deacylase (147 aa).

A Gly-cisPro motif, important for rejection of L-amino acids motif is present at residues 136-137; the sequence is GP.

Belongs to the DTD family. In terms of assembly, homodimer.

It is found in the cytoplasm. It catalyses the reaction glycyl-tRNA(Ala) + H2O = tRNA(Ala) + glycine + H(+). The catalysed reaction is a D-aminoacyl-tRNA + H2O = a tRNA + a D-alpha-amino acid + H(+). Functionally, an aminoacyl-tRNA editing enzyme that deacylates mischarged D-aminoacyl-tRNAs. Also deacylates mischarged glycyl-tRNA(Ala), protecting cells against glycine mischarging by AlaRS. Acts via tRNA-based rather than protein-based catalysis; rejects L-amino acids rather than detecting D-amino acids in the active site. By recycling D-aminoacyl-tRNA to D-amino acids and free tRNA molecules, this enzyme counteracts the toxicity associated with the formation of D-aminoacyl-tRNA entities in vivo and helps enforce protein L-homochirality. This is D-aminoacyl-tRNA deacylase from Streptococcus dysgalactiae subsp. equisimilis (Streptococcus equisimilis).